The sequence spans 539 residues: Protein TIC 55, chloroplastic (539 aa).

Residues 1–50 (MAVPFLSSSLQLTPTSPILFTKVTPTPIIHNHRSTCTIPTKPRLRLLRRS) constitute a chloroplast transit peptide. Ala-51 carries the post-translational modification N-acetylalanine. Over 51 to 482 (AVAGTAVSDQ…VIKSFELWKN (432 aa)) the chain is Stromal. Residues 88–193 (WYPLYLTKNV…VKDSQGVVWV (106 aa)) form the Rieske domain. [2Fe-2S] cluster is bound by residues Cys-129, His-131, Cys-148, and His-151. Residues His-242 and His-247 each coordinate Fe cation. Positions 467–470 (CRSC) match the Redox-active motif motif. The helical transmembrane segment at 483 to 500 (ILSATAVALTALAILVVS) threads the bilayer. Over 501 to 504 (RQWK) the chain is Chloroplast intermembrane. A helical membrane pass occupies residues 505 to 527 (AVLLGSAALCSAAAYTCLRAINL). Residues 528-539 (NTNNFIRTHRRL) lie on the Stromal side of the membrane.

As to quaternary structure, part of the Tic complex. Interacts with TIC62 and TIC110. It depends on [2Fe-2S] cluster as a cofactor. As to expression, highly expressed in green tissues and very low levels in non-photosynthetic tissues such as roots and etiolated seedlings.

The protein localises to the plastid. It localises to the chloroplast inner membrane. Its function is as follows. Involved in protein precursor import into chloroplasts. Part of the redox regulon consisting of TIC32, TIC 55 and TIC62. The polypeptide is Protein TIC 55, chloroplastic (TIC55) (Arabidopsis thaliana (Mouse-ear cress)).